The following is a 207-amino-acid chain: Protein GET1 (207 aa).

Topologically, residues 1–4 (MPSL) are lumenal. A helical transmembrane segment spans residues 5 to 24 (LISVLFLHIAIYIINTIAAS). Residues 25-110 (TIDSLLWLIY…FFDVAVKALR (86 aa)) are Cytoplasmic-facing. A coiled-coil region spans residues 44–97 (IAREQHQMKLEVVQLKREMNATSSQDEFAKWAKLRRRHDKALEEYEVKNKQFSR). Residues 111-131 (WAGTSGLIVFLQFWFSKTPIF) form a helical membrane-spanning segment. The Lumenal portion of the chain corresponds to 132 to 155 (TLPPSWIPWQVEWVLSFPRAPMGT). A helical membrane pass occupies residues 156–172 (VSIQVWGGACAVVVALI). The Cytoplasmic segment spans residues 173–207 (GEAIGATVRYLYASKDSMEAIKVGAGAVEKEKKRQ).

This sequence belongs to the WRB/GET1 family. Interacts with GET3.

It localises to the endoplasmic reticulum membrane. Its function is as follows. Required for the post-translational delivery of tail-anchored (TA) proteins to the endoplasmic reticulum. Acts as a membrane receptor for soluble GET3, which recognizes and selectively binds the transmembrane domain of TA proteins in the cytosol. This is Protein GET1 from Paracoccidioides brasiliensis (strain Pb18).